A 1274-amino-acid polypeptide reads, in one-letter code: RNA-directed RNA polymerase VP2 (1274 aa).

Residues 561 to 798 enclose the RdRp catalytic domain; it reads LSTTSGSVVT…KLYALMGCRI (238 aa).

The protein belongs to the reoviridae RNA-directed RNA polymerase family.

Its subcellular location is the virion. The catalysed reaction is RNA(n) + a ribonucleoside 5'-triphosphate = RNA(n+1) + diphosphate. Functionally, RNA-directed RNA polymerase that is involved in transcription and genome replication. Following infection, it catalyzes the synthesis of fully conservative plus strands. After core assembly, which consists in recruitment of one capped plus-strand for each genomic segments and polymerase complexes, the polymerase switches mode and catalyzes the synthesis of complementary minus-strands. The sequence is that of RNA-directed RNA polymerase VP2 (S2) from Aquareovirus C (isolate Golden shiner/USA/GSRV/1977) (AQRV-C).